The primary structure comprises 364 residues: 3-isopropylmalate dehydrogenase (364 aa).

NAD(+) is bound at residue 78–91; the sequence is GKKWDYLSIDKRPE. 4 residues coordinate substrate: Arg-99, Arg-109, Arg-138, and Asp-227. Asp-227, Asp-251, and Asp-255 together coordinate Mg(2+). Position 285 to 297 (285 to 297) interacts with NAD(+); it reads GSAPDIAGKNIAN.

It belongs to the isocitrate and isopropylmalate dehydrogenases family. LeuB type 1 subfamily. In terms of assembly, homodimer. Mg(2+) is required as a cofactor. Mn(2+) serves as cofactor.

The protein resides in the cytoplasm. It catalyses the reaction (2R,3S)-3-isopropylmalate + NAD(+) = 4-methyl-2-oxopentanoate + CO2 + NADH. The protein operates within amino-acid biosynthesis; L-leucine biosynthesis; L-leucine from 3-methyl-2-oxobutanoate: step 3/4. Catalyzes the oxidation of 3-carboxy-2-hydroxy-4-methylpentanoate (3-isopropylmalate) to 3-carboxy-4-methyl-2-oxopentanoate. The product decarboxylates to 4-methyl-2 oxopentanoate. The chain is 3-isopropylmalate dehydrogenase from Buchnera aphidicola subsp. Uroleucon erigeronensis.